An 807-amino-acid polypeptide reads, in one-letter code: FAD-linked oxidoreductase pytB (807 aa).

The signal sequence occupies residues 1–18 (MRFLGIAAVATFSTVVSA). Asn-45, Asn-106, Asn-120, Asn-242, Asn-295, Asn-351, Asn-419, and Asn-699 each carry an N-linked (GlcNAc...) asparagine glycan. Residues 60–231 (FDELPVLLAY…VEFTLSLTSI (172 aa)) enclose the FAD-binding PCMH-type domain.

Belongs to the oxygen-dependent FAD-linked oxidoreductase family. Requires FAD as cofactor.

It functions in the pathway secondary metabolite biosynthesis. Functionally, FAD-linked oxidoreductase; part of the gene cluster that mediates the biosynthesis of pyranterreones, a family of antioxidative compounds. The first step of pyranonigrins biosynthesis is performed by the hybrid PKS-NRPS synthetase pytA that condenses 4 malonyl-CoA units ato the acetyl starter unit by the modular PKS of pytA. The acyl chain is then connected to an L-serine through the amide bond by the modular NRPS of pytA. A tetramic acid is formed and released from the PKS-NRPS pytA to give pyranterreone 5 with the help of the thioesterase pytI. Pyranterreone 5 could be methylated by pytC to afford pyranterreone 6. Both pyranterreones 5 and 6 are subsequently oxidized by the FAD-linked oxidoreductase pytB and the cytochrome P450 monooxygenase pytD to form the fused gamma-pyrone core, resulting in pyranterreones 7 and 11, respectively. The hydroxy group at C-8 of pyranterreones 7 and 11 are dehydrated by the aspartyl protease pytH to form a delta-7 double bond to give pyranterreones 3 and 1, 2 accordingly. The exo-methylene of pyranterreone 3 could be reduced into a pendant methyl by reductase pytE to provide pyranterreone 4, also known as cordylactam. Pyranterreone 4 can be reconverted to pyranterreone 3 through pytB-catalyzed dehydrogenation or further oxidized to pyranterreones 9 and 10. This Aspergillus terreus (strain NIH 2624 / FGSC A1156) protein is FAD-linked oxidoreductase pytB.